We begin with the raw amino-acid sequence, 995 residues long: Bifunctional glutamine synthetase adenylyltransferase/adenylyl-removing enzyme (995 aa).

An adenylyl removase region spans residues 1–474; that stretch reads MNHSAPGNAD…HYEKLFEGDD (474 aa). GlnE regions lie at residues 122–333 and 637–853; these read RRMK…MKRQ and SYEE…MRRA. Residues 479-995 are adenylyl transferase; it reads AKLPALDYSA…LEGTSPASAR (517 aa).

Belongs to the GlnE family. The cofactor is Mg(2+).

The catalysed reaction is [glutamine synthetase]-O(4)-(5'-adenylyl)-L-tyrosine + phosphate = [glutamine synthetase]-L-tyrosine + ADP. It catalyses the reaction [glutamine synthetase]-L-tyrosine + ATP = [glutamine synthetase]-O(4)-(5'-adenylyl)-L-tyrosine + diphosphate. In terms of biological role, involved in the regulation of glutamine synthetase GlnA, a key enzyme in the process to assimilate ammonia. When cellular nitrogen levels are high, the C-terminal adenylyl transferase (AT) inactivates GlnA by covalent transfer of an adenylyl group from ATP to specific tyrosine residue of GlnA, thus reducing its activity. Conversely, when nitrogen levels are low, the N-terminal adenylyl removase (AR) activates GlnA by removing the adenylyl group by phosphorolysis, increasing its activity. The regulatory region of GlnE binds the signal transduction protein PII (GlnB) which indicates the nitrogen status of the cell. This chain is Bifunctional glutamine synthetase adenylyltransferase/adenylyl-removing enzyme, found in Bradyrhizobium diazoefficiens (strain JCM 10833 / BCRC 13528 / IAM 13628 / NBRC 14792 / USDA 110).